The primary structure comprises 105 residues: MATGTPDSQARFGQSVKGLLTEKVNTCGTDVIALTKQVLKGSRSSELLGQAARNMVLQEDAILHSEDSLRKMAIITTHLQYQQEAIQKNVEQSPDLQDQLSHLLK.

The protein belongs to the BORCS7 family. As to quaternary structure, component of the BLOC-one-related complex (BORC) which is composed of BLOC1S1, BLOC1S2, BORCS5, BORCS6, BORCS7, BORCS8, KXD1 and SNAPIN.

The protein localises to the lysosome membrane. In terms of biological role, as part of the BORC complex may play a role in lysosomes movement and localization at the cell periphery. Associated with the cytosolic face of lysosomes, the BORC complex may recruit ARL8B and couple lysosomes to microtubule plus-end-directed kinesin motor. The chain is BLOC-1-related complex subunit 7 from Mus musculus (Mouse).